The primary structure comprises 335 residues: NAC domain-containing protein 40 (335 aa).

The 143-residue stretch at 14-156 (LFPGFRFSPT…ALVVCRLRKN (143 aa)) folds into the NAC domain. Residues 112–162 (VGTKRTLVFHIGRAPRGERTEWIMHEYCIHGAPQDALVVCRLRKNADFRAS) mediate DNA binding. Positions 245–254 (PTNPTHQETI) are enriched in polar residues. The interval 245-267 (PTNPTHQETISSESSSKRSKCGI) is disordered. Residues 313-333 (VLATTVFLAILFSFFWTVLIA) form a helical membrane-spanning segment.

Post-translationally, proteolytically cleaved, probably by metalloprotease activity. This cleavage mediates a translocation from the plasma membrane to the nucleus. As to expression, expressed in seeds, leaves, roots and inflorescence. Expressed in roots, rosette leaves, cauline leaves, shoot apex, stems and flowers.

It is found in the cell membrane. The protein localises to the nucleus. Its function is as follows. Transcriptional activator activated by proteolytic cleavage through regulated intramembrane proteolysis (RIP), probably via metalloprotease activity. Regulates gibberellic acid-mediated salt-responsive repression of seed germination and flowering via FT, thus delaying seed germination under high salinity conditions. This chain is NAC domain-containing protein 40, found in Arabidopsis thaliana (Mouse-ear cress).